The primary structure comprises 476 residues: Bifunctional protein HldE (476 aa).

A ribokinase region spans residues M1–G319. N195–E198 lines the ATP pocket. D264 is an active-site residue. The interval M344–G476 is cytidylyltransferase.

This sequence in the N-terminal section; belongs to the carbohydrate kinase PfkB family. The protein in the C-terminal section; belongs to the cytidylyltransferase family. Homodimer.

It catalyses the reaction D-glycero-beta-D-manno-heptose 7-phosphate + ATP = D-glycero-beta-D-manno-heptose 1,7-bisphosphate + ADP + H(+). The enzyme catalyses D-glycero-beta-D-manno-heptose 1-phosphate + ATP + H(+) = ADP-D-glycero-beta-D-manno-heptose + diphosphate. Its pathway is nucleotide-sugar biosynthesis; ADP-L-glycero-beta-D-manno-heptose biosynthesis; ADP-L-glycero-beta-D-manno-heptose from D-glycero-beta-D-manno-heptose 7-phosphate: step 1/4. It functions in the pathway nucleotide-sugar biosynthesis; ADP-L-glycero-beta-D-manno-heptose biosynthesis; ADP-L-glycero-beta-D-manno-heptose from D-glycero-beta-D-manno-heptose 7-phosphate: step 3/4. Its function is as follows. Catalyzes the phosphorylation of D-glycero-D-manno-heptose 7-phosphate at the C-1 position to selectively form D-glycero-beta-D-manno-heptose-1,7-bisphosphate. Functionally, catalyzes the ADP transfer from ATP to D-glycero-beta-D-manno-heptose 1-phosphate, yielding ADP-D-glycero-beta-D-manno-heptose. This chain is Bifunctional protein HldE, found in Photobacterium profundum (strain SS9).